The primary structure comprises 101 residues: Small ribosomal subunit protein uS14A (101 aa).

It belongs to the universal ribosomal protein uS14 family. As to quaternary structure, part of the 30S ribosomal subunit. Contacts proteins S3 and S10.

Functionally, binds 16S rRNA, required for the assembly of 30S particles and may also be responsible for determining the conformation of the 16S rRNA at the A site. This Mycolicibacterium smegmatis (strain ATCC 700084 / mc(2)155) (Mycobacterium smegmatis) protein is Small ribosomal subunit protein uS14A.